The following is an 801-amino-acid chain: Potassium transporter 1 (801 aa).

Positions 1 to 20 (MSSALEVEGSGSPGVEPAAT) are disordered. At 1–57 (MSSALEVEGSGSPGVEPAATATASRLKRHDSLFGDAEKVSGGKHHGGSAVSWAVTLH) the chain is on the cytoplasmic side. The chain crosses the membrane as a helical span at residues 58-80 (LAFQSVGIIYGDIGTSPLYVYSS). Residues 81–94 (TFPDGIGHRDDLVG) are Extracellular-facing. A helical transmembrane segment spans residues 95–115 (VLSLILYTLIIIPMLKYVFIV). At 116-181 (LYANDNGDGG…HKLESSRAAK (66 aa)) the chain is on the cytoplasmic side. The chain crosses the membrane as a helical span at residues 182 to 202 (MALFFLTILGTSMVMGDGTLT). Residues 203-219 (PAISVLSAVSGIREKAP) lie on the Extracellular side of the membrane. The helical transmembrane segment at 220–240 (NLTQTQVVLISVAILFMLFSV) threads the bilayer. The Cytoplasmic segment spans residues 241-247 (QRFGTDK). A helical membrane pass occupies residues 248–268 (VGYTFAPIISVWFLLIAGIGL). Residues 269 to 298 (YNLVVHEITILKAFNPWYIVQYFRRNGKKG) are Extracellular-facing. Residues 299–319 (WVSLGGVVLCVTGTEGMFADL) form a helical membrane-spanning segment. Topologically, residues 320-328 (GHFNIRAVQ) are cytoplasmic. The helical transmembrane segment at 329 to 349 (ISFNCILFPSVALCYIGQAAY) threads the bilayer. Topologically, residues 350–375 (LRKFPENVSDTFYKSIPGKYRDRLNF) are extracellular. The helical transmembrane segment at 376-398 (GPLFWPTFIVAILAAIIASQAML) threads the bilayer. Topologically, residues 399–429 (SGAFAILSKALSLGCLPRVRVIHTSKKYEGQ) are cytoplasmic. The helical transmembrane segment at 430–450 (VYIPEVNFMMGLASIIVTIAF) threads the bilayer. Over 451–461 (RTTTSIGNAYG) the chain is Extracellular. The helical transmembrane segment at 462–482 (ICVVTTFMVTTHLMTVVMLLI) threads the bilayer. The Cytoplasmic portion of the chain corresponds to 483–487 (WKKHL). A helical membrane pass occupies residues 488–508 (VFILLFYCVFGFTEVVYLSSI). Residues 509–511 (LSK) lie on the Extracellular side of the membrane. A helical transmembrane segment spans residues 512–532 (FVDGGYLPFCFAMVLMTMMAT). Residues 533–801 (WHYVHVRRYW…LLKVGITYEI (269 aa)) are Cytoplasmic-facing. Positions 679-728 (DDDDEAAARPRRSTSSAVHSEEAIQAASSGRTTASSVQLQAGGEPPAAMD) are disordered. The span at 704-717 (AASSGRTTASSVQL) shows a compositional bias: polar residues.

It belongs to the HAK/KUP transporter (TC 2.A.72.3) family. Expressed almost exclusively in roots.

The protein resides in the cell membrane. In terms of biological role, high-affinity potassium transporter. Also transports rubidium, with the same affinity and cesium, with a lower affinity. This Oryza sativa subsp. japonica (Rice) protein is Potassium transporter 1 (HAK1).